The primary structure comprises 271 residues: Neurexophilin-1 (271 aa).

An N-terminal signal peptide occupies residues 1 to 21 (MQAACWYVLLLLQPTVYLVTC). The interval 22–97 (ANLTNGGKSE…WDWLRNSTDL (76 aa)) is II. N-linked (GlcNAc...) asparagine glycans are attached at residues Asn23, Asn68, Asn93, Asn146, Asn156, and Asn162. The tract at residues 98-176 (QEPRPRAKRR…LVPPTKIVEF (79 aa)) is III. Residues 177-185 (DLAQQTVID) are IV (linker domain). A v (Cys-rich) region spans residues 186–271 (AKDSKSFNCR…HSDTPYFPSG (86 aa)).

It belongs to the neurexophilin family. Post-translationally, may be proteolytically processed at the boundary between the N-terminal non-conserved and the central conserved domain in neuron-like cells. Highest level in brain.

It is found in the secreted. May be signaling molecules that resemble neuropeptides. Ligand for alpha-neurexins. This Rattus norvegicus (Rat) protein is Neurexophilin-1 (Nxph1).